The chain runs to 248 residues: Granzyme B (248 aa).

The signal sequence occupies residues 1–18 (MKLLLLLLSFSLAPKTEA). The propeptide at 19-20 (GE) is activation peptide. A Peptidase S1 domain is found at 21–246 (IIGGHEAKPH…FLSWIKKTMK (226 aa)). Cys-50 and Cys-66 form a disulfide bridge. Residues His-65 and Asp-109 each act as charge relay system in the active site. Disulfide bonds link Cys-143/Cys-210 and Cys-174/Cys-189. Ser-204 acts as the Charge relay system in catalysis.

Belongs to the peptidase S1 family. Granzyme subfamily.

The protein resides in the secreted. It is found in the cytolytic granule. It catalyses the reaction Preferential cleavage: -Asp-|-Xaa- &gt;&gt; -Asn-|-Xaa- &gt; -Met-|-Xaa-, -Ser-|-Xaa-.. Its activity is regulated as follows. Inactivated by the serine protease inhibitor diisopropylfluorophosphate. In terms of biological role, abundant protease in the cytosolic granules of cytotoxic T-cells and NK-cells which activates caspase-independent pyroptosis when delivered into the target cell through the immunological synapse. It cleaves after Asp. Once delivered into the target cell, acts by catalyzing cleavage of gasdermin-E (GSDME), releasing the pore-forming moiety of GSDME, thereby triggering pyroptosis and target cell death. Seems to be linked to an activation cascade of caspases (aspartate-specific cysteine proteases) responsible for apoptosis execution. Cleaves caspase-3 and -9 (CASP3 and CASP9, respectively) to give rise to active enzymes mediating apoptosis. Cleaves and activates CASP7 in response to bacterial infection, promoting plasma membrane repair. The protein is Granzyme B (Gzmb) of Rattus norvegicus (Rat).